The chain runs to 72 residues: DNA-directed RNA polymerase subunit omega (72 aa).

Belongs to the RNA polymerase subunit omega family. In terms of assembly, the RNAP catalytic core consists of 2 alpha, 1 beta, 1 beta' and 1 omega subunit. When a sigma factor is associated with the core the holoenzyme is formed, which can initiate transcription.

It carries out the reaction RNA(n) + a ribonucleoside 5'-triphosphate = RNA(n+1) + diphosphate. Its function is as follows. Promotes RNA polymerase assembly. Latches the N- and C-terminal regions of the beta' subunit thereby facilitating its interaction with the beta and alpha subunits. In Limosilactobacillus reuteri (strain DSM 20016) (Lactobacillus reuteri), this protein is DNA-directed RNA polymerase subunit omega.